The sequence spans 428 residues: Dihydroorotase (428 aa).

The Zn(2+) site is built by histidine 61 and histidine 63. Substrate is bound by residues histidine 63–arginine 65 and asparagine 95. Zn(2+)-binding residues include aspartate 153, histidine 180, and histidine 233. Asparagine 279 is a substrate binding site. Aspartate 306 contributes to the Zn(2+) binding site. Aspartate 306 is a catalytic residue. Substrate is bound by residues histidine 310 and phenylalanine 324–glycine 325.

Belongs to the metallo-dependent hydrolases superfamily. DHOase family. Class I DHOase subfamily. The cofactor is Zn(2+).

It carries out the reaction (S)-dihydroorotate + H2O = N-carbamoyl-L-aspartate + H(+). It functions in the pathway pyrimidine metabolism; UMP biosynthesis via de novo pathway; (S)-dihydroorotate from bicarbonate: step 3/3. Catalyzes the reversible cyclization of carbamoyl aspartate to dihydroorotate. This chain is Dihydroorotase, found in Geobacillus kaustophilus (strain HTA426).